Reading from the N-terminus, the 343-residue chain is Squamosa promoter-binding-like protein 11 (343 aa).

The interval 1 to 48 is disordered; sequence MECNPVSSTTSSSLLWDWDATASAEPPPPPGKRGGRDSSSASASAKRG. 2 stretches are compositionally biased toward low complexity: residues 7 to 19 and 37 to 48; these read SSTT…WDWD and DSSSASASAKRG. The segment at 64 to 141 adopts an SBP-type zinc-finger fold; the sequence is APRCQVEGCG…SDHNARRRKP (78 aa). Zn(2+)-binding residues include C67, C72, C89, H92, C108, C111, H115, and C127. The Bipartite nuclear localization signal signature appears at 124–140; sequence KRSCRRRLSDHNARRRK.

In terms of tissue distribution, expressed in stems, leaf sheaths, and young panicles.

The protein resides in the nucleus. Trans-acting factor that binds specifically to the consensus nucleotide sequence 5'-TNCGTACAA-3'. May be involved in panicle development. In Oryza sativa subsp. japonica (Rice), this protein is Squamosa promoter-binding-like protein 11 (SPL11).